We begin with the raw amino-acid sequence, 275 residues long: NH(3)-dependent NAD(+) synthetase (275 aa).

Residue 46-53 coordinates ATP; it reads GISGGQDS. Asp-52 serves as a coordination point for Mg(2+). Arg-140 is a deamido-NAD(+) binding site. Thr-160 serves as a coordination point for ATP. Residue Glu-165 participates in Mg(2+) binding. Deamido-NAD(+) contacts are provided by Lys-173 and Asp-180. Residues Lys-189 and Thr-211 each contribute to the ATP site. 260-261 provides a ligand contact to deamido-NAD(+); that stretch reads HK.

It belongs to the NAD synthetase family. In terms of assembly, homodimer.

The catalysed reaction is deamido-NAD(+) + NH4(+) + ATP = AMP + diphosphate + NAD(+) + H(+). It functions in the pathway cofactor biosynthesis; NAD(+) biosynthesis; NAD(+) from deamido-NAD(+) (ammonia route): step 1/1. Its function is as follows. Catalyzes the ATP-dependent amidation of deamido-NAD to form NAD. Uses ammonia as a nitrogen source. This chain is NH(3)-dependent NAD(+) synthetase, found in Escherichia coli (strain K12 / MC4100 / BW2952).